Consider the following 316-residue polypeptide: Transaldolase (316 aa).

Catalysis depends on Lys125, which acts as the Schiff-base intermediate with substrate.

It belongs to the transaldolase family. Type 1 subfamily. As to quaternary structure, homodimer.

Its subcellular location is the cytoplasm. It catalyses the reaction D-sedoheptulose 7-phosphate + D-glyceraldehyde 3-phosphate = D-erythrose 4-phosphate + beta-D-fructose 6-phosphate. The protein operates within carbohydrate degradation; pentose phosphate pathway; D-glyceraldehyde 3-phosphate and beta-D-fructose 6-phosphate from D-ribose 5-phosphate and D-xylulose 5-phosphate (non-oxidative stage): step 2/3. Transaldolase is important for the balance of metabolites in the pentose-phosphate pathway. The chain is Transaldolase from Acidovorax sp. (strain JS42).